Consider the following 100-residue polypeptide: C-X-C motif chemokine 3 (100 aa).

The signal sequence occupies residues 1–31 (MAPPTCRLLSAALVLLLLLATNHQATGAVVA). 2 disulfides stabilise this stretch: Cys36–Cys62 and Cys38–Cys78.

The protein belongs to the intercrine alpha (chemokine CxC) family.

The protein localises to the secreted. In terms of biological role, ligand for CXCR2. Has chemotactic activity for neutrophils. May play a role in inflammation and exert its effects on endothelial cells in an autocrine fashion. This chain is C-X-C motif chemokine 3, found in Mus musculus (Mouse).